Here is a 746-residue protein sequence, read N- to C-terminus: Polyphosphate kinase (746 aa).

Residues 1 to 17 show a composition bias toward polar residues; the sequence is MRQPNTQAEAQHTQPSV. Residues 1–60 are disordered; it reads MRQPNTQAEAQHTQPSVGSIAAHRPNTVAATVSGLEPDIDADLDAYEESEESQDGGARLP. The segment covering 37–53 has biased composition (acidic residues); it reads PDIDADLDAYEESEESQ. ATP is bound at residue asparagine 102. Residues arginine 429 and arginine 459 each contribute to the Mg(2+) site. Residue histidine 489 is the Phosphohistidine intermediate of the active site. 3 residues coordinate ATP: tyrosine 522, arginine 618, and histidine 646.

This sequence belongs to the polyphosphate kinase 1 (PPK1) family. It depends on Mg(2+) as a cofactor. In terms of processing, an intermediate of this reaction is the autophosphorylated ppk in which a phosphate is covalently linked to a histidine residue through a N-P bond.

It carries out the reaction [phosphate](n) + ATP = [phosphate](n+1) + ADP. Functionally, catalyzes the reversible transfer of the terminal phosphate of ATP to form a long-chain polyphosphate (polyP). The polypeptide is Polyphosphate kinase (Streptomyces coelicolor (strain ATCC BAA-471 / A3(2) / M145)).